Here is a 228-residue protein sequence, read N- to C-terminus: DOPA 4,5-dioxygenase (228 aa).

Homodimer. In terms of tissue distribution, expressed at high level in coloured cap tissue and at least 10 times lower level in the stipe.

Its subcellular location is the cytoplasm. It functions in the pathway pigment biosynthesis; betalain biosynthesis. Functionally, extradiol dioxygenase that opens up the cyclic ring of DOPA between carbons 4 and 5 thus producing an unstable seco-DOPA that rearranges non-enzymatically to betalamic acid. Can also catalyze the formation of muscaflavin (a pigment found in the hygrocybe mushrooms family and of some amanita species only) by a 2,3-extradiol cleavage of DOPA. This Amanita muscaria (Fly agaric) protein is DOPA 4,5-dioxygenase (DODA).